The primary structure comprises 496 residues: Cytochrome P450 monooxygenase claT (496 aa).

Residues 2 to 22 (LSLIVEATLLLVVLVLSAHYV) form a helical membrane-spanning segment. A heme-binding site is contributed by Cys-423.

The protein belongs to the cytochrome P450 family. The cofactor is heme.

It localises to the membrane. The catalysed reaction is wigandol + 4 reduced [NADPH--hemoprotein reductase] + 4 O2 = arnebinol A + 4 oxidized [NADPH--hemoprotein reductase] + 6 H2O + 4 H(+). It carries out the reaction arnebinol A + reduced [NADPH--hemoprotein reductase] + O2 = clavilactone A + oxidized [NADPH--hemoprotein reductase] + H2O + H(+). The enzyme catalyses (2E)-geranylhydroquinone + reduced [NADPH--hemoprotein reductase] + O2 = isoalliodorol + oxidized [NADPH--hemoprotein reductase] + H2O + H(+). It participates in secondary metabolite biosynthesis; terpenoid biosynthesis. Functionally, cytochrome P450 monooxygenase; part of the gene cluster that mediates the biosynthesis of clavilactone A, a meroterpenoid that features a unique benzo-fused ten-membered carbocyclic ring unit with an alpha,beta-epoxy-gamma-lactone moiety, forming an intriguing 10/5/3 tricyclic nested skeleton. ClaR, ClaS and ClaT are sufficient to produce clavilactone A. Within the pathway, claT acts as a multifunctional cytochrome P450 monooxygenase that catalyzes a ten-electron oxidation to accomplish the biosynthesis of the 10/5/3 tricyclic nested skeleton in clavilactones. The biosynthesis begins with the prenyltransferase claS that transfers geranyl pyrophosphate (GPP) to hydroquinone to produces geranylhydroquinone. The cytochrome P450 monooxygenase claR then catalyzes the diradical coupling reaction between the intramolecular hydroquinone and allyl moieties to form the benzo-fused ten-membered carbocyclic ring unit of wigantol. Finally the cytochrome P450 monooxygenase claT exquisitely and stereoselectively assembles the alpha,beta-epoxy-gamma-lactone moiety, producing clavilactone A via arnebinol A. The protein is Cytochrome P450 monooxygenase claT of Ampulloclitocybe clavipes (Club foot).